Consider the following 128-residue polypeptide: Fluoride-specific ion channel FluC (128 aa).

4 consecutive transmembrane segments (helical) span residues 5–25 (IVAI…LSLA), 35–55 (LGTL…AVVF), 67–87 (LFVI…SVEV), and 96–116 (FGWA…LTAL). Residues Gly75 and Thr78 each coordinate Na(+).

This sequence belongs to the fluoride channel Fluc/FEX (TC 1.A.43) family.

Its subcellular location is the cell inner membrane. The enzyme catalyses fluoride(in) = fluoride(out). With respect to regulation, na(+) is not transported, but it plays an essential structural role and its presence is essential for fluoride channel function. Its function is as follows. Fluoride-specific ion channel. Important for reducing fluoride concentration in the cell, thus reducing its toxicity. This chain is Fluoride-specific ion channel FluC, found in Burkholderia lata (strain ATCC 17760 / DSM 23089 / LMG 22485 / NCIMB 9086 / R18194 / 383).